The chain runs to 246 residues: UL16-binding protein 2 (246 aa).

A signal peptide spans 1 to 25; the sequence is MAAAAATKILLCLPLLLLLSGWSRA. Positions 29–117 are MHC class I alpha-1 like; it reads DPHSLCYDIT…IQLENYTPKE (89 aa). C50 and C66 are joined by a disulfide. N68 and N82 each carry an N-linked (GlcNAc...) asparagine glycan. Positions 118–210 are MHC class I alpha-2 like; it reads PLTLQARMSC…MDSTLEPSAG (93 aa). An intrachain disulfide couples C127 to C190. Residue S216 coordinates a protein. A lipid anchor (GPI-anchor amidated serine) is attached at S217. The propeptide at 218 to 246 is removed in mature form; sequence GTTQLRATATTLILCCLLIILPCFILPGI.

This sequence belongs to the MHC class I family. Interacts with KLRK1/NKG2D. Does not bind to beta2-microglobulin. In terms of assembly, (Microbial infection) In CMV-infected cells, interacts with the viral glycoprotein UL16; this interaction causes ULBP2 retention in the endoplasmic reticulum and cis-Golgi and prevents binding to and activation of KLRK1/NKG2D, providing CMV with an immune evasion mechanism. Expressed in various types of cancer cell lines and in the fetus, but not in normal tissues.

The protein resides in the cell membrane. It is found in the endoplasmic reticulum. Its subcellular location is the secreted. In terms of biological role, binds and activates the KLRK1/NKG2D receptor, mediating natural killer cell cytotoxicity. In Homo sapiens (Human), this protein is UL16-binding protein 2.